Reading from the N-terminus, the 386-residue chain is 2,3-diketo-5-methylthiopentyl-1-phosphate enolase (386 aa).

Residue Lys85 is the Proton acceptor of the active site. Substrate contacts are provided by residues Lys131, Lys157–Glu160, His248, Gly316, and Gly338–Thr339. The Mg(2+) site is built by Lys157, Asp159, and Glu160. N6-carboxylysine is present on Lys157.

It belongs to the RuBisCO large chain family. Type IV subfamily. In terms of assembly, homodimer. Requires Mg(2+) as cofactor.

It carries out the reaction 5-methylsulfanyl-2,3-dioxopentyl phosphate = 2-hydroxy-5-methylsulfanyl-3-oxopent-1-enyl phosphate. It participates in amino-acid biosynthesis; L-methionine biosynthesis via salvage pathway; L-methionine from S-methyl-5-thio-alpha-D-ribose 1-phosphate: step 3/6. Its function is as follows. Catalyzes the enolization of 2,3-diketo-5-methylthiopentyl-1-phosphate (DK-MTP-1-P) into 2-hydroxy-3-keto-5-methylthiopentenyl-1-phosphate (HK-MTPenyl-1-P). The polypeptide is 2,3-diketo-5-methylthiopentyl-1-phosphate enolase (Microcystis aeruginosa (strain NIES-843 / IAM M-2473)).